The chain runs to 592 residues: Syntaxin-binding protein 3 (592 aa).

The mediates interaction with DOC2B stretch occupies residues 1 to 255; that stretch reads MAPPVAERGL…STVLHELTFQ (255 aa).

The protein belongs to the STXBP/unc-18/SEC1 family. In terms of assembly, interacts with DOC2B; the interaction is direct, occurs at the cell membrane, excludes interaction with STX4 and regulates glucose-stimulated insulin secretion. Interacts with STX4. In terms of processing, phosphorylated by PKC in platelets in response to thrombin stimulation; phosphorylation inhibits binding to STX4. In terms of tissue distribution, megakaryocytes and platelets.

Its subcellular location is the cytoplasm. It localises to the cytosol. It is found in the cell membrane. Its function is as follows. Together with STX4 and VAMP2, may play a role in insulin-dependent movement of GLUT4 and in docking/fusion of intracellular GLUT4-containing vesicles with the cell surface in adipocytes. The polypeptide is Syntaxin-binding protein 3 (STXBP3) (Homo sapiens (Human)).